The sequence spans 599 residues: UPF0313 protein UNCMA_01890 (599 aa).

The 277-residue stretch at 281–557 (EDIPALRTVR…RALLQYKNPE (277 aa)) folds into the Radical SAM core domain. [4Fe-4S] cluster is bound by residues Cys-299, Cys-303, and Cys-306.

The protein belongs to the UPF0313 family. Requires [4Fe-4S] cluster as cofactor.

This is UPF0313 protein UNCMA_01890 from Methanocella arvoryzae (strain DSM 22066 / NBRC 105507 / MRE50).